The chain runs to 502 residues: Mannitol dehydrogenase 2 (502 aa).

The protein belongs to the mannitol dehydrogenase family.

It catalyses the reaction D-mannitol + NAD(+) = D-fructose + NADH + H(+). Catalyzes the NAD(H)-dependent interconversion of D-fructose and D-mannitol in the mannitol metabolic pathway. The chain is Mannitol dehydrogenase 2 from Saccharomyces cerevisiae (strain ATCC 204508 / S288c) (Baker's yeast).